An 87-amino-acid chain; its full sequence is Toxin RelG (87 aa).

This sequence belongs to the RelE toxin family. In terms of assembly, interacts with cognate antitoxin RelF, which neutralizes the toxin. Also interacts with non-cognate antitoxin RelB in vitro, in M.smegmatis this neutralizes the toxicity of this toxin.

Its function is as follows. Toxic component of a type II toxin-antitoxin (TA) system. Has RNase activity and preferentially cleaves at the 3'-end of purine ribonucleotides. Overexpression in M.tuberculosis or M.smegmatis inhibits colony formation in a bacteriostatic rather than bacteriocidal fashion. Its toxic effect is neutralized by coexpression with cognate antitoxin RelB2 (shown only for M.smegmatis). Overexpression also increases the number of gentamicin-tolerant and levofloxacin-tolerant persister cells. In terms of biological role, in combination with cognate antitoxin RelF represses its own promoter. Has been seen to bind DNA in complex with antitoxin RelF but not alone. The sequence is that of Toxin RelG (relG) from Mycobacterium tuberculosis (strain ATCC 25618 / H37Rv).